The chain runs to 302 residues: MKIAVLSRNSRLYSTRRLMEAAQSRGHQIRVVDPLRCYMNIATSNPEIHYKGQKLEAFDAVIPRIGASITFYGTAVLRQFEMLGTYPLNESQGISRSRDKLRSMQLLSREGVGMPATGFAHSPDDTDDLMQLVGGSPVVIKLLEGTQGIGVVLAETRKAASSVIQALRGLKAHFLVQEFIEEAGGADIRCLVVGGKVVAAMKRQGKEGEFRSNLHRGGSASLVRITPKERATAVKAAKVLGLNVCGVDILRANSGPVIMEVNSSPGLEGIETATGKDVAGMIIEFIERNRKPGKTGTKGRRG.

The 184-residue stretch at 104–287 (MQLLSREGVG…VAGMIIEFIE (184 aa)) folds into the ATP-grasp domain. Residues Lys-141, 178–179 (EF), Asp-187, and 211–213 (RSN) each bind ATP. Residues Asp-248, Glu-260, and Asn-262 each coordinate Mg(2+). Positions 248, 260, and 262 each coordinate Mn(2+).

It belongs to the RimK family. Requires Mg(2+) as cofactor. Mn(2+) serves as cofactor.

The protein is Probable alpha-L-glutamate ligase of Halorhodospira halophila (strain DSM 244 / SL1) (Ectothiorhodospira halophila (strain DSM 244 / SL1)).